A 327-amino-acid polypeptide reads, in one-letter code: GMP reductase (327 aa).

Residue C175 is the Thioimidate intermediate of the active site. An NADP(+)-binding site is contributed by I204–V227.

This sequence belongs to the IMPDH/GMPR family. GuaC type 2 subfamily.

The enzyme catalyses IMP + NH4(+) + NADP(+) = GMP + NADPH + 2 H(+). Functionally, catalyzes the irreversible NADPH-dependent deamination of GMP to IMP. It functions in the conversion of nucleobase, nucleoside and nucleotide derivatives of G to A nucleotides, and in maintaining the intracellular balance of A and G nucleotides. The sequence is that of GMP reductase from Lysinibacillus sphaericus (strain C3-41).